A 520-amino-acid chain; its full sequence is TnpB-like protein L79 (520 aa).

Positions 21–47 (GSKTKKKVFVKKKPPDKKPLKKPVKKT) are enriched in basic residues. The segment at 21-52 (GSKTKKKVFVKKKPPDKKPLKKPVKKTVKTDK) is disordered. Zn(2+)-binding residues include C474, C477, C491, and C494.

It in the central section; belongs to the transposase 2 family. This sequence in the C-terminal section; belongs to the transposase 35 family.

The polypeptide is TnpB-like protein L79 (Acanthamoeba polyphaga mimivirus (APMV)).